We begin with the raw amino-acid sequence, 2604 residues long: MTFNNIKDENNDDIAIIGMGFRFPGGGNNPYQFWNQLSNKMDGISKIPTEKWSRSFYEQKYINNEYGGVLKDEEWKNFDPLFFGISPKEAPIIDPQQRLLMTTLWEAFEDANIKPSTFRGSDTAVFIGMMNTDYQRCQFRDISYVNPYITPGTAGSFISNRLSFSFDLRGPSMTLDTACSSSLNAVYLGCQAIANGDSKMAIVGGVNGIFDPCFSMTFSGLNMLGHKGQCRSFDAGADGYIRSEGGGVCILKKYSDAIKDGDRIYCVIKGGSSNVDGYNAKTNIIQPSMKAQGENIEIALKKSGVNPSDIYYIEAHGTGTPVGDPIEIEAISRIFKDNHTPDAPLYIGSVKSNIGHLESAAGIASLIKVALSLKNRSLVPNIHFEKPNPLIKFEDWNIRVVTDEIQFPINKLINMGINCFGLSGSNCHMILSEAPINYDELLKTTNNNSTSSSSNDDKKEYLIPFSANCNISLDKYIEKLISNQSIYKDTILFKDFVKHQTISKSNLIKRKVITASDWDDFLNKRNETTSTSSLTSTISAPASSTPVIYVFTGQGPQWRDMGKALYETESVFKDAIDHCDKLLANYFGYSILQKLLSLESEDSPEIHHPILAQPSIFLIQVGLVALYKSFGISPSIVVGHSFGEIPSALFSDVISLETAVKIVYYRGLAQNLTMGTGRLLSIGIGADAYLEKCALLYPEIEIACYNDPNSIVITGSEQDLLGAKSTLSAEGVFCAFLGTPCSFHSSKQEMIKEKIFKDLSDLPESNVPCVPFFSTITGSQLSHKGFYNVQYIYDNLRMPVEFTKAISNIFNFIEENESYKNAIFLEIGPHPTLGFYIPKCKPSNSTITSKPIIVSPLHKKKEELTQFKLAISTLYCNGVEIDFASGQQLLPTSSSSGGGDISSFKESTNKLPRYQWDFEEYWDEPNQSKMVKRGPSNNLLGHDQFAGNTLMELFIDIDKSAHQYLKGHKIKGKYLFPGSGYIDNILRQFNGQDITIFNLEFSNPFFLKDGVQHHLQTSITPTTKGEFKVEFFIKDNRNSTKWTKTSNGRIGLFKHNPKNNKLDIEKLKSQCSFTTLTKSEVYNKLLLLSLPYGPTFQRVESCSIGDGCSFFKLSMSPCSEFDKDFLNPSIIDCAFHGLLVLSEGPQEIVFDRLQDMKFYSSNVPSTRPQFIYAFAKFDKIEGNSTHGSLNIILEDGTLLISIKNVKCTSLIRLKKQSIKYPSQNVYSHHWQSKDSPLTLIENQLIEEKSSESKINFEKLLNDKLFNYYLIRLLNQSIKSEFIEFDYKTSTVDTLDIGSKNAKLLEKIQSILNPIDSLDQSIDITSLKQAIIVKSSFKNEIKLVEKSIKRIVSLLKGGESEHFSPSNPSSPNDTPRNNSNNCSSKNNAASSDDADDDTNNEETINQLNNEPFNFSNSQFISNQNQLISKTIVNSFDRLINSIEIGEKKLIKIIDLSSIYQNYQLSKLLLLQLNQLLINLSNNNNIEIEYTIPSNTKNIDSITEETKSISNVLNIKYRSFDLQDDLESNGYLNSNYDLIITSLLLVSTNSIDSNEVLSKLYKLLLPKGQLILMEPPKGVLSFNLLFANDFKQSLEIKSEQEIKSLIIYCGFTKIETNLNTKDDEEQQQPPPPSILIVQAEKRDIESMSLTFSSDPKSLNSSYSNCIFIVSKEQKENPTSYIQEYFDITEFFCQNATIIEADDSELLTKTIESGVGKNDIIFFLVSLEELTIENYKQVTMQYTLVNQILLRNNLSTRFALLTYDSQNGGKNYLGSSLIGTFRYFLEFRSLNIFSIDVDKDSIDNLTLFLRLVDLSTIGDRETIVRNNKIFVQKIFKEPKLLSPSNNYEKNTNNLFLYSNSNLDFSFQSKEKLLHGCVEIKVMSTGINYKDSLFYRGLLPQEVFSKGDIYSPPFGLECAGYITRVAPSGVTRFKVGDQVVGFASHSLSSHVTTHQNKIVLKPENISFNEAAAVCVVYATSYYSIFHIGAFIADKESILVHSATGGVGLASLNLLKWKRNQLKKHGNSEISNDASIYATVGSKEKIDYLQEKYGDLITAIYNSRDTEYCDEIKQQSAQGGVDLILNTLSGDYLSSNFRSLSQVGRIMDLSVTQLVENDSLDFSNFKYHVGYNTIDLDRATKYNSKIIRDILTEVFDAISDGSLENIPVKVFPAIQVKTAIEYINERVHIGKIVVDFENFEQDILKPALQEKENPIQLNKVKKLEHTCDTLNNTILITGQTGIAVHILKWIISGSVLNSNKSQQQVTDFIILSRSSLKWELENLINQTKHKYGDRFRFHYKSVNIADLNSTRTAIDQVYSSCKNVSPIKSVLHFATVYEYILPENITQTVIDNTHNPKAVGAINLHNLSIEKDWKLENFILFSSIGAIIGGSKQCAYSSANLVLDSLSNYRKSIGLASTSINWGGLDAGGVAATDKSVASFLEGQGILLVSLSKILGCLDSVFQPSNSHLSNFMLSSFNIDNLLSSAPQMKRKMDHHLTNYKTSSASSDDSLGDSGSTQAKVISTISELLSIHPSKLNLDTRLKDYGIDSLLTVQLKNWIDKEFTKNLFTHLQLSSSSINSIIQRISSKSTSTSTPNPTNTSKQTATKKT.

The Ketosynthase family 3 (KS3) domain maps to 11-433 (NDDIAIIGMG…GSNCHMILSE (423 aa)). Active-site for beta-ketoacyl synthase activity residues include C179, H316, and H356. The interval 631–664 (GISPSIVVGHSFGEIPSALFSDVISLETAVKIVY) is acyl/malonyl transferases. S641 functions as the For acyl/malonyl transferase activity in the catalytic mechanism. The tract at residues 937 to 1057 (NNLLGHDQFA…GRIGLFKHNP (121 aa)) is N-terminal hotdog fold. Residues 937–1216 (NNLLGHDQFA…CTSLIRLKKQ (280 aa)) enclose the PKS/mFAS DH domain. The Proton acceptor; for dehydratase activity role is filled by H968. The tract at residues 1072–1216 (SFTTLTKSEV…CTSLIRLKKQ (145 aa)) is C-terminal hotdog fold. The active-site Proton donor; for dehydratase activity is D1132. The disordered stretch occupies residues 1357–1407 (GESEHFSPSNPSSPNDTPRNNSNNCSSKNNAASSDDADDDTNNEETINQLN). A compositionally biased stretch (low complexity) spans 1363-1390 (SPSNPSSPNDTPRNNSNNCSSKNNAASS). Residues 2507-2584 (GDSGSTQAKV…SIIQRISSKS (78 aa)) form the Carrier domain. At S2544 the chain carries O-(pantetheine 4'-phosphoryl)serine. Positions 2581–2597 (SSKSTSTSTPNPTNTSK) are enriched in low complexity. Positions 2581 to 2604 (SSKSTSTSTPNPTNTSKQTATKKT) are disordered.

Pantetheine 4'-phosphate is required as a cofactor.

Its function is as follows. Probable polyketide synthase. The sequence is that of Probable polyketide synthase 17 (pks17) from Dictyostelium discoideum (Social amoeba).